Reading from the N-terminus, the 249-residue chain is Cell division protein DivIB (249 aa).

The Cytoplasmic segment spans residues Met1–Arg19. The chain crosses the membrane as a helical span at residues Ile20–Tyr40. The region spanning Phe41–Arg109 is the POTRA domain. At Phe41–Gln249 the chain is on the extracellular side.

It belongs to the FtsQ/DivIB family. DivIB subfamily.

The protein resides in the cell membrane. Functionally, cell division protein that may be involved in stabilizing or promoting the assembly of the division complex. This chain is Cell division protein DivIB, found in Clostridium acetobutylicum (strain ATCC 824 / DSM 792 / JCM 1419 / IAM 19013 / LMG 5710 / NBRC 13948 / NRRL B-527 / VKM B-1787 / 2291 / W).